The chain runs to 1191 residues: DNA-directed RNA polymerase subunit beta (1191 aa).

A compositionally biased stretch (basic and acidic residues) spans 1171 to 1181 (RVKQEAEEKQA). Residues 1171–1191 (RVKQEAEEKQAEQVSEVVQED) form a disordered region. Over residues 1182 to 1191 (EQVSEVVQED) the composition is skewed to low complexity.

The protein belongs to the RNA polymerase beta chain family. As to quaternary structure, the RNAP catalytic core consists of 2 alpha, 1 beta, 1 beta' and 1 omega subunit. When a sigma factor is associated with the core the holoenzyme is formed, which can initiate transcription.

It catalyses the reaction RNA(n) + a ribonucleoside 5'-triphosphate = RNA(n+1) + diphosphate. In terms of biological role, DNA-dependent RNA polymerase catalyzes the transcription of DNA into RNA using the four ribonucleoside triphosphates as substrates. The polypeptide is DNA-directed RNA polymerase subunit beta (Streptococcus agalactiae serotype Ia (strain ATCC 27591 / A909 / CDC SS700)).